Here is a 281-residue protein sequence, read N- to C-terminus: Elongation factor Ts (281 aa).

An involved in Mg(2+) ion dislocation from EF-Tu region spans residues 80–83 (TDFV).

It belongs to the EF-Ts family.

It is found in the cytoplasm. In terms of biological role, associates with the EF-Tu.GDP complex and induces the exchange of GDP to GTP. It remains bound to the aminoacyl-tRNA.EF-Tu.GTP complex up to the GTP hydrolysis stage on the ribosome. In Vibrio atlanticus (strain LGP32) (Vibrio splendidus (strain Mel32)), this protein is Elongation factor Ts.